Reading from the N-terminus, the 643-residue chain is 3D-(3,5/4)-trihydroxycyclohexane-1,2-dione hydrolase (643 aa).

Residue glutamate 65 coordinates thiamine diphosphate. The segment at 441 to 521 (SLPGDLQRMW…VNVLLFDNCG (81 aa)) is thiamine pyrophosphate binding. Positions 492 and 519 each coordinate Mg(2+).

It belongs to the TPP enzyme family. The cofactor is Mg(2+). Thiamine diphosphate serves as cofactor.

It carries out the reaction 3D-3,5/4-trihydroxycyclohexane-1,2-dione + H2O = 5-deoxy-D-glucuronate + H(+). Its pathway is polyol metabolism; myo-inositol degradation into acetyl-CoA; acetyl-CoA from myo-inositol: step 3/7. Its function is as follows. Involved in the cleavage of the C1-C2 bond of 3D-(3,5/4)-trihydroxycyclohexane-1,2-dione (THcHDO) to yield 5-deoxy-glucuronate (5DG). This chain is 3D-(3,5/4)-trihydroxycyclohexane-1,2-dione hydrolase, found in Clostridium botulinum (strain Alaska E43 / Type E3).